Here is a 459-residue protein sequence, read N- to C-terminus: Vanillin aminotransferase (459 aa).

Residues 115 to 116 (GS) and D255 contribute to the pyridoxal 5'-phosphate site. K284 bears the N6-(pyridoxal phosphate)lysine mark. 320 to 321 (FT) lines the pyridoxal 5'-phosphate pocket. A coiled-coil region spans residues 428–459 (LSLEELDELIRIYGKALKDTEKRVEELKSQKK).

This sequence belongs to the class-III pyridoxal-phosphate-dependent aminotransferase family. In terms of tissue distribution, expressed in placental tissue of immature fruit.

The catalysed reaction is vanillin + L-alanine = vanillylamine + pyruvate. In terms of biological role, involved in the biosynthesis of capsaicinoids natural products, pungent alkaloids synthesized from phenylpropanoid intermediates in the placental tissue of chili pepper fruit acting as repellant on herbivorous mammals and conferring spiciness to hot peppers. Can transfer an amine from alanine to vanillin, forming vanillylamine and pyruvate. The protein is Vanillin aminotransferase of Capsicum frutescens (Cayenne pepper).